Consider the following 997-residue polypeptide: MKYATGTDNAMTSGISGQTNNSNSASTEMQPTTSTPTAVHKEATPTATTTATYANGNPNPNANPSQSQPSNALFCEQVTTVTNLFEKWNDCERTVVMYALLKRLRYPSLKFLQYSIDSNLTQNLGTSQTNLSSVVIDINANNPVYLQNLLNAYKTFQPCDLLDAMSSSSSDKDSMPCYGSDFQITTSAQCDERKLYARKEDILHEVLNMLPLLKPGNEEAKLIYLTLIPVAVKDTMQQIVPTELVQQIFSYLLIHPAITSEDRRALNIWLRHLEDHIQAAAAGLTNRSYFLQPSPQLVAGGSSTGSGSCSSSATSSSTASCSSVASSSLCPASGSRSSRTNDWQTIAPPSKQLQNKLAGDWRGSGGGSSSGSINPLCDNLNGITLNELASSQNSLGLSLEGSSSLVNGVVAGAGSMLGIGGGDDHDTSFSKNGTEILDFDPVTADMGEACSLASSSLCGRNGGNPVEDRSQPPPNLQQQMLQPPPYASILMGNVGDQFGEINRWSLDSKIAALKTRRSNSLTTQTISSCSSSSNSSVITVNDNCSNSTENLAQFANKPRSFSLSIEHQRGALINSGSDTRLDEFKPNYIKFHTRNVGMSGIGLWLKSLRLHKYIELFKNMTYEEMLLITEDFLQSVGVTKGASHKLALCIEKLKERANILNRVEQELLTGQMELSTAVEELTNIVLTPMKPLESPGPPEENIGLRFLKVIDIVTNTLQQDPYAAQDDETLGVLMWILDRSIHNEAFMNHASQLKDLKFKLSKMKISMVPKMHHVKPAGVGPNNGNINKPRWNGKTRKCDPKNGSNDRINNRKNSNDMLNFSLNCLPHPLPHHSQQPPPPLPQFDYNGYGGGPSHQPQYKSSSYPSFMGNPQQQPPPPPPTKSHHHAQQMQQMLQQHNHFPALPQQTPPQSHRRSLNNLILVAGGPQQPQQLIFKPGQGVLTNNGSSDNLGLERNQQPQQQQRKLSGGVTSAEQQPKKTMAAVVMENLAKFDQHFTLF.

A compositionally biased stretch (polar residues) spans 1 to 37; that stretch reads MKYATGTDNAMTSGISGQTNNSNSASTEMQPTTSTPT. 2 disordered regions span residues 1–69 and 329–370; these read MKYA…QSQP and LCPA…GSSS. 2 stretches are compositionally biased toward low complexity: residues 44-69 and 329-338; these read TPTA…QSQP and LCPASGSRSS. Residues Ser564 and Ser575 each carry the phosphoserine modification. The tract at residues 583–763 is interaction with cup; it reads EFKPNYIKFH…KDLKFKLSKM (181 aa). An SAM domain is found at 600–654; sequence GIGLWLKSLRLHKYIELFKNMTYEEMLLITEDFLQSVGVTKGASHKLALCIEKLK. Disordered stretches follow at residues 773–892 and 944–972; these read HVKP…MQQM and GSSD…TSAE. 2 stretches are compositionally biased toward polar residues: residues 802 to 822 and 854 to 864; these read NGSN…NFSL and HQPQYKSSSYP. Ser970 is subject to Phosphoserine.

The protein belongs to the SMAUG family. As to quaternary structure, interacts with oskar (osk). Binds to the 3'-UTR of nos. Interacts with cup, which in turn recruits eIF4-E, leading to an indirect interaction between smg and eIF4-E that prevents mRNA translation.

It localises to the cytoplasm. In terms of biological role, translation regulator that binds to the 3'-UTR of specific mRNAs such as nanos (nos) and prevent their translation. Prevents translation of unlocalized nos in the bulk cytoplasm via the recruitment of cup. In Drosophila erecta (Fruit fly), this protein is Protein Smaug.